Consider the following 331-residue polypeptide: 5-dehydro-2-deoxygluconokinase (331 aa).

The protein belongs to the carbohydrate kinase PfkB family.

The enzyme catalyses 5-dehydro-2-deoxy-D-gluconate + ATP = 6-phospho-5-dehydro-2-deoxy-D-gluconate + ADP + H(+). The protein operates within polyol metabolism; myo-inositol degradation into acetyl-CoA; acetyl-CoA from myo-inositol: step 5/7. In terms of biological role, catalyzes the phosphorylation of 5-dehydro-2-deoxy-D-gluconate (2-deoxy-5-keto-D-gluconate or DKG) to 6-phospho-5-dehydro-2-deoxy-D-gluconate (DKGP). The chain is 5-dehydro-2-deoxygluconokinase from Halalkalibacterium halodurans (strain ATCC BAA-125 / DSM 18197 / FERM 7344 / JCM 9153 / C-125) (Bacillus halodurans).